Reading from the N-terminus, the 30-residue chain is Brevinin-2PTa (30 aa).

A disulfide bridge links C24 with C30.

In terms of tissue distribution, expressed by the skin glands.

It is found in the secreted. Has antibacterial activity against the Gram-positive bacterium S.aureus ATCC 25923 (MIC=18 uM) and the Gram-negative bacterium E.coli ATCC 25726 (MIC=18 uM). In Pulchrana picturata (Malaysian fire frog), this protein is Brevinin-2PTa.